A 108-amino-acid polypeptide reads, in one-letter code: Nucleoid-associated protein GK0018 (108 aa).

Positions 1–32 (MMRGGMGNMQKMLKQMQKMQKEMQKAQEELAE) are disordered. The span at 9 to 18 (MQKMLKQMQK) shows a compositional bias: low complexity. Over residues 19-32 (MQKEMQKAQEELAE) the composition is skewed to basic and acidic residues.

This sequence belongs to the YbaB/EbfC family. As to quaternary structure, homodimer.

The protein localises to the cytoplasm. Its subcellular location is the nucleoid. Its function is as follows. Binds to DNA and alters its conformation. May be involved in regulation of gene expression, nucleoid organization and DNA protection. The protein is Nucleoid-associated protein GK0018 of Geobacillus kaustophilus (strain HTA426).